The following is a 1083-amino-acid chain: Error-prone DNA polymerase (1083 aa).

It belongs to the DNA polymerase type-C family. DnaE2 subfamily.

It is found in the cytoplasm. It carries out the reaction DNA(n) + a 2'-deoxyribonucleoside 5'-triphosphate = DNA(n+1) + diphosphate. Functionally, DNA polymerase involved in damage-induced mutagenesis and translesion synthesis (TLS). It is not the major replicative DNA polymerase. In Xanthomonas oryzae pv. oryzae (strain PXO99A), this protein is Error-prone DNA polymerase.